Reading from the N-terminus, the 309-residue chain is Carbamate kinase-like protein (309 aa).

The tract at residues asparagine 125–asparagine 144 is disordered.

It belongs to the carbamate kinase family.

In Mycoplasma pneumoniae (strain ATCC 29342 / M129 / Subtype 1) (Mycoplasmoides pneumoniae), this protein is Carbamate kinase-like protein.